A 272-amino-acid polypeptide reads, in one-letter code: Dermonecrotic toxin StSicTox-betaIF1 (272 aa).

H5 is a catalytic residue. Residues E25 and D27 each coordinate Mg(2+). H41 serves as the catalytic Nucleophile. 2 disulfide bridges follow: C45–C51 and C47–C189. Position 85 (D85) interacts with Mg(2+).

The protein belongs to the arthropod phospholipase D family. Class II subfamily. Mg(2+) is required as a cofactor. In terms of tissue distribution, expressed by the venom gland.

It localises to the secreted. The catalysed reaction is an N-(acyl)-sphingosylphosphocholine = an N-(acyl)-sphingosyl-1,3-cyclic phosphate + choline. It carries out the reaction an N-(acyl)-sphingosylphosphoethanolamine = an N-(acyl)-sphingosyl-1,3-cyclic phosphate + ethanolamine. The enzyme catalyses a 1-acyl-sn-glycero-3-phosphocholine = a 1-acyl-sn-glycero-2,3-cyclic phosphate + choline. It catalyses the reaction a 1-acyl-sn-glycero-3-phosphoethanolamine = a 1-acyl-sn-glycero-2,3-cyclic phosphate + ethanolamine. In terms of biological role, dermonecrotic toxins cleave the phosphodiester linkage between the phosphate and headgroup of certain phospholipids (sphingolipid and lysolipid substrates), forming an alcohol (often choline) and a cyclic phosphate. This toxin acts on sphingomyelin (SM). It may also act on ceramide phosphoethanolamine (CPE), lysophosphatidylcholine (LPC) and lysophosphatidylethanolamine (LPE), but not on lysophosphatidylserine (LPS), and lysophosphatidylglycerol (LPG). It acts by transphosphatidylation, releasing exclusively cyclic phosphate products as second products. Induces dermonecrosis, hemolysis, increased vascular permeability, edema, inflammatory response, and platelet aggregation. The polypeptide is Dermonecrotic toxin StSicTox-betaIF1 (Sicarius terrosus (Cave spider)).